The following is a 133-amino-acid chain: Sec-independent protein translocase protein TatB (133 aa).

The helical transmembrane segment at 1 to 21 threads the bilayer; it reads MFDIGFWELVLIAIVALVVLG. The interval 67–133 is disordered; the sequence is EQMGMQNLSP…ASQPAEKKAE (67 aa). Over residues 70-84 the composition is skewed to polar residues; it reads GMQNLSPELQKSVES. The span at 97–116 shows a compositional bias: low complexity; the sequence is AATPSSEASSTSSNPSSATE.

Belongs to the TatB family. In terms of assembly, the Tat system comprises two distinct complexes: a TatABC complex, containing multiple copies of TatA, TatB and TatC subunits, and a separate TatA complex, containing only TatA subunits. Substrates initially bind to the TatABC complex, which probably triggers association of the separate TatA complex to form the active translocon.

The protein localises to the cell inner membrane. In terms of biological role, part of the twin-arginine translocation (Tat) system that transports large folded proteins containing a characteristic twin-arginine motif in their signal peptide across membranes. Together with TatC, TatB is part of a receptor directly interacting with Tat signal peptides. TatB may form an oligomeric binding site that transiently accommodates folded Tat precursor proteins before their translocation. This Vibrio cholerae serotype O1 (strain ATCC 39315 / El Tor Inaba N16961) protein is Sec-independent protein translocase protein TatB.